Here is a 378-residue protein sequence, read N- to C-terminus: Putative F-box protein At3g24580 (378 aa).

One can recognise an F-box domain in the interval 1–47; that stretch reads MTKMSNLPNDLAEEVLSRVSLTSLRNVRLTCKDWNTLSKGESFAKNH.

The polypeptide is Putative F-box protein At3g24580 (Arabidopsis thaliana (Mouse-ear cress)).